The primary structure comprises 148 residues: Transthyretin-like protein 2 (148 aa).

The N-terminal stretch at Met-1 to Ser-17 is a signal peptide. An N-linked (GlcNAc...) asparagine glycan is attached at Asn-77.

It belongs to the nematode transthyretin-like family.

It is found in the secreted. This chain is Transthyretin-like protein 2 (ttr-2), found in Caenorhabditis elegans.